A 663-amino-acid polypeptide reads, in one-letter code: (R)-specific secondary-alkylsulfatase (663 aa).

A signal peptide spans 1-28 (MSRFIRASQRRTLLATLIAATLAQPLLA). The Zn(2+) site is built by His-179, His-181, Asp-183, and His-184. A sulfate-binding site is contributed by Gln-232. Zn(2+) is bound by residues Glu-291 and Asp-310. Residues 318-323 (NLLTPR) and Arg-328 each bind sulfate. His-355 serves as a coordination point for Zn(2+). Position 417 (Tyr-417) interacts with sulfate.

It belongs to the metallo-beta-lactamase superfamily. Type III sulfatase family. In terms of assembly, homodimer.

It carries out the reaction an (R)-secondary-alkyl sulfate + H2O = an (S)-secondary-alcohol + sulfate.. Functionally, alkylsulfatase that catalyzes the enantioselective hydrolysis of secondary-alkylsulfates with strict inversion of configuration, leading to the formation of homochiral (S)-configurated alcohols and nonreacted sulfate esters. The substrate spectrum includes a range of linear, branched or cyclic sec-alkylsulfates. Can use sec-alkylsulfate esters bearing aromatic, olefinic and acetylenic moieties. Acts by cleaving the C-O bond, resulting in inversion at the carbon. This Pseudomonas sp protein is (R)-specific secondary-alkylsulfatase.